The primary structure comprises 810 residues: Plasminogen (810 aa).

An N-terminal signal peptide occupies residues 1–19 (MEHKEVVLLLLLFLKSGQG). The 79-residue stretch at 20 to 98 (EPLDDYVNTK…RDVVLFEKKV (79 aa)) folds into the PAN domain. Disulfide bonds link C49/C73, C53/C61, C103/C181, C124/C164, C152/C176, C185/C262, C188/C316, C206/C245, C234/C257, C275/C352, C296/C335, and C324/C347. Kringle domains follow at residues 103–181 (CKTG…IPEC), 184–262 (ECMH…IPRC), and 275–352 (CLKG…IPSC). Polar residues predominate over residues 125 to 141 (QKWSSTSPHRPTFSPAT). Residues 125–145 (QKWSSTSPHRPTFSPATHPSE) form a disordered region. Positions 136, 158, and 172 each coordinate L-lysine. An O-linked (GalNAc...) threonine glycan is attached at T365. Intrachain disulfides connect C377–C454, C398–C437, C426–C449, C481–C560, C502–C543, C531–C555, C567–C685, C577–C585, and C607–C623. Kringle domains are found at residues 377 to 454 (CYHG…LKKC) and 481 to 560 (CMFG…VPQC). The L-lysine site is built by D432 and R445. The 228-residue stretch at 581 to 808 (VVGGCVAYPH…FVTWIEGVMR (228 aa)) folds into the Peptidase S1 domain. Phosphoserine is present on S597. Catalysis depends on charge relay system residues H622 and D665. S688 carries the phosphoserine modification. Cystine bridges form between C699–C766, C729–C745, and C756–C784. Residue S760 is the Charge relay system of the active site.

This sequence belongs to the peptidase S1 family. Plasminogen subfamily. Interacts with CSPG4 and AMOT. Interacts (via the Kringle domains) with HRG; the interaction tethers PLG to the cell surface and enhances its activation. Interacts (via Kringle 4 domain) with ADA; the interaction stimulates PLG activation when in complex with DPP4. Angiostatin: Interacts with ATP5F1A; the interaction inhibits most of the angiogenic effects of angiostatin. In the presence of the inhibitor, the activation involves only cleavage after Arg-580, yielding two chains held together by two disulfide bonds. In the absence of the inhibitor, the activation involves additionally the removal of the activation peptide.

Its subcellular location is the secreted. The enzyme catalyses Preferential cleavage: Lys-|-Xaa &gt; Arg-|-Xaa, higher selectivity than trypsin. Converts fibrin into soluble products.. Its activity is regulated as follows. Converted into plasmin by plasminogen activators, both plasminogen and its activator being bound to fibrin. Activated with catalytic amounts of streptokinase. Its function is as follows. Plasmin dissolves the fibrin of blood clots and acts as a proteolytic factor in a variety of other processes including embryonic development, tissue remodeling, tumor invasion, and inflammation. In ovulation, weakens the walls of the Graafian follicle. It activates the urokinase-type plasminogen activator, collagenases and several complement zymogens, such as C1, C4 and C5. Cleavage of fibronectin and laminin leads to cell detachment and apoptosis. Also cleaves fibrin, thrombospondin and von Willebrand factor. Its role in tissue remodeling and tumor invasion may be modulated by CSPG4. Binds to cells. The protein is Plasminogen (PLG) of Macaca mulatta (Rhesus macaque).